Reading from the N-terminus, the 178-residue chain is ATP-dependent protease subunit HslV (178 aa).

Thr7 is a catalytic residue. Gly162, Cys165, and Thr168 together coordinate Na(+).

The protein belongs to the peptidase T1B family. HslV subfamily. In terms of assembly, a double ring-shaped homohexamer of HslV is capped on each side by a ring-shaped HslU homohexamer. The assembly of the HslU/HslV complex is dependent on binding of ATP.

The protein resides in the cytoplasm. The enzyme catalyses ATP-dependent cleavage of peptide bonds with broad specificity.. Allosterically activated by HslU binding. Its function is as follows. Protease subunit of a proteasome-like degradation complex believed to be a general protein degrading machinery. In Leptothrix cholodnii (strain ATCC 51168 / LMG 8142 / SP-6) (Leptothrix discophora (strain SP-6)), this protein is ATP-dependent protease subunit HslV.